The primary structure comprises 920 residues: Isoleucine--tRNA ligase (920 aa).

Positions 58-68 (PYANGHLHLGH) match the 'HIGH' region motif. E569 provides a ligand contact to L-isoleucyl-5'-AMP. Positions 610 to 614 (KMSKS) match the 'KMSKS' region motif. K613 contacts ATP. Positions 895, 898, 910, and 913 each coordinate Zn(2+).

It belongs to the class-I aminoacyl-tRNA synthetase family. IleS type 1 subfamily. Monomer. Requires Zn(2+) as cofactor.

The protein resides in the cytoplasm. It catalyses the reaction tRNA(Ile) + L-isoleucine + ATP = L-isoleucyl-tRNA(Ile) + AMP + diphosphate. Functionally, catalyzes the attachment of isoleucine to tRNA(Ile). As IleRS can inadvertently accommodate and process structurally similar amino acids such as valine, to avoid such errors it has two additional distinct tRNA(Ile)-dependent editing activities. One activity is designated as 'pretransfer' editing and involves the hydrolysis of activated Val-AMP. The other activity is designated 'posttransfer' editing and involves deacylation of mischarged Val-tRNA(Ile). The sequence is that of Isoleucine--tRNA ligase from Helicobacter pylori (strain P12).